The primary structure comprises 304 residues: Homoserine kinase (304 aa).

90 to 100 is an ATP binding site; the sequence is PLARGLGSSAS.

This sequence belongs to the GHMP kinase family. Homoserine kinase subfamily.

It is found in the cytoplasm. The enzyme catalyses L-homoserine + ATP = O-phospho-L-homoserine + ADP + H(+). The protein operates within amino-acid biosynthesis; L-threonine biosynthesis; L-threonine from L-aspartate: step 4/5. Catalyzes the ATP-dependent phosphorylation of L-homoserine to L-homoserine phosphate. In Staphylococcus aureus (strain bovine RF122 / ET3-1), this protein is Homoserine kinase.